Reading from the N-terminus, the 410-residue chain is Metal tolerance protein 3 (410 aa).

The segment at 1–58 is disordered; that stretch reads MDGDDRRTPLLGGEGGSTRPPSLRRRDSARSLRSTFLSRLPDKVRGGGDPERPAADVD. The Cytoplasmic segment spans residues 1–114; the sequence is MDGDDRRTPL…EDKEQKQSES (114 aa). Residues 40–58 show a composition bias toward basic and acidic residues; the sequence is LPDKVRGGGDPERPAADVD. The helical transmembrane segment at 115-135 threads the bilayer; sequence AMKISNYANIILLVFKVYATI. The Vacuolar portion of the chain corresponds to 136-140; sequence KTGSM. A helical transmembrane segment spans residues 141 to 161; that stretch reads AIAASTLDSLLDFLAGGILYF. The Cytoplasmic portion of the chain corresponds to 162 to 184; the sequence is THLTMKSVNIYKYPIGKLRVQPV. The chain crosses the membrane as a helical span at residues 185–205; sequence GIIVFAAIMATLGFQVLIQAI. The Vacuolar segment spans residues 206–221; the sequence is EQLVENKAGEKMTPEQ. Residues 222–242 traverse the membrane as a helical segment; it reads LIWLYSIMLSATVVKLALYIY. The Cytoplasmic portion of the chain corresponds to 243–258; that stretch reads CRSSGNSIVQAYAKDH. The chain crosses the membrane as a helical span at residues 259–275; it reads YFDVVTNVVGLVAAVLG. Topologically, residues 276–284 are vacuolar; sequence DKFFWWIDP. Residues 285–303 form a helical membrane-spanning segment; that stretch reads VGAVLLAVYTIVNWSGTVY. The Cytoplasmic portion of the chain corresponds to 304–410; that stretch reads ENAVTLVGQC…VRSRLPSTEP (107 aa).

This sequence belongs to the cation diffusion facilitator (CDF) transporter (TC 2.A.4) family. SLC30A subfamily.

It localises to the vacuole membrane. Its function is as follows. Involved in sequestration of excess metal in the cytoplasm into vacuoles to maintain metal homeostasis. The protein is Metal tolerance protein 3 (MTP3) of Oryza sativa subsp. japonica (Rice).